The sequence spans 186 residues: Dynactin subunit 3 (186 aa).

An N-acetylalanine modification is found at Ala2. Residues 135 to 157 (QQQDQCVEITEESKALLEEYNKT) are a coiled coil.

Belongs to the dynactin subunit 3 family. As to quaternary structure, subunit of dynactin, a multiprotein complex part of a tripartite complex with dynein and a adapter, such as BICDL1, BICD2 or HOOK3. The dynactin complex is built around ACTR1A/ACTB filament and consists of an actin-related filament composed of a shoulder domain, a pointed end and a barbed end. Its length is defined by its flexible shoulder domain. The soulder is composed of 2 DCTN1 subunits, 4 DCTN2 and 2 DCTN3. The 4 DCNT2 (via N-terminus) bind the ACTR1A filament and act as molecular rulers to determine the length. The pointed end is important for binding dynein-dynactin cargo adapters. Consists of 4 subunits: ACTR10, DCNT4, DCTN5 and DCTN6. The barbed end is composed of a CAPZA1:CAPZB heterodimers, which binds ACTR1A/ACTB filament and dynactin and stabilizes dynactin.

The protein localises to the cytoplasm. It is found in the cytoskeleton. The protein resides in the microtubule organizing center. It localises to the centrosome. Its subcellular location is the chromosome. The protein localises to the centromere. It is found in the kinetochore. The protein resides in the spindle. It localises to the cleavage furrow. Its subcellular location is the midbody. Its function is as follows. Part of the dynactin complex that activates the molecular motor dynein for ultra-processive transport along microtubules. Together with dynein may be involved in spindle assembly and cytokinesis. The polypeptide is Dynactin subunit 3 (DCTN3) (Bos taurus (Bovine)).